Reading from the N-terminus, the 276-residue chain is Large ribosomal subunit protein uL2 (276 aa).

The segment at 219–276 is disordered; the sequence is TVRGSAMNPNDHPHGGGEGRSPIGRPSPVTPWGKPALGYKTRKKNKHSDKFIVTGRKR.

Belongs to the universal ribosomal protein uL2 family. As to quaternary structure, part of the 50S ribosomal subunit. Forms a bridge to the 30S subunit in the 70S ribosome.

Functionally, one of the primary rRNA binding proteins. Required for association of the 30S and 50S subunits to form the 70S ribosome, for tRNA binding and peptide bond formation. It has been suggested to have peptidyltransferase activity; this is somewhat controversial. Makes several contacts with the 16S rRNA in the 70S ribosome. In Alkaliphilus metalliredigens (strain QYMF), this protein is Large ribosomal subunit protein uL2.